The primary structure comprises 518 residues: Protease Do-like 4, mitochondrial (518 aa).

Residues 1-23 constitute a mitochondrion transit peptide; that stretch reads MLFRFLQTLARFCRFLLISVLGF. Residues 98–262 are serine protease; sequence ESGGSGFVIS…IPTPVIKHFL (165 aa). Active-site charge relay system residues include His-116, Asp-147, and Ser-225. In terms of domain architecture, PDZ spans 278–358; that stretch reads DISYQLMENS…HFVSMKKLDE (81 aa).

The protein belongs to the peptidase S1C family.

It localises to the mitochondrion membrane. Functionally, putative serine protease. The protein is Protease Do-like 4, mitochondrial (DEGP4) of Arabidopsis thaliana (Mouse-ear cress).